Consider the following 554-residue polypeptide: Folate synthesis bifunctional protein, mitochondrial (554 aa).

A mitochondrion-targeting transit peptide spans M1–Y42. Positions V90–L215 are HPPK. The 269-residue stretch at T273–K541 folds into the Pterin-binding domain. The segment at V275 to G554 is DHPS. Mg(2+) is bound at residue N280. Residues T320, D357, N376, D449, K494, and R529–H531 each bind (7,8-dihydropterin-6-yl)methyl diphosphate.

The protein in the N-terminal section; belongs to the HPPK family. This sequence in the C-terminal section; belongs to the DHPS family. Mg(2+) serves as cofactor. Ubiquitous.

Its subcellular location is the mitochondrion. The enzyme catalyses 6-hydroxymethyl-7,8-dihydropterin + ATP = (7,8-dihydropterin-6-yl)methyl diphosphate + AMP + H(+). The catalysed reaction is (7,8-dihydropterin-6-yl)methyl diphosphate + 4-aminobenzoate = 7,8-dihydropteroate + diphosphate. The protein operates within cofactor biosynthesis; tetrahydrofolate biosynthesis; 2-amino-4-hydroxy-6-hydroxymethyl-7,8-dihydropteridine diphosphate from 7,8-dihydroneopterin triphosphate: step 4/4. It functions in the pathway cofactor biosynthesis; tetrahydrofolate biosynthesis; 7,8-dihydrofolate from 2-amino-4-hydroxy-6-hydroxymethyl-7,8-dihydropteridine diphosphate and 4-aminobenzoate: step 1/2. Its function is as follows. Catalyzes the first two consecutive steps of tetrahydrofolate biosynthesis. In Arabidopsis thaliana (Mouse-ear cress), this protein is Folate synthesis bifunctional protein, mitochondrial.